Reading from the N-terminus, the 285-residue chain is MPELPEVEVVRRGLEEHMVGRTIVSAAVVHPRTARNQAGGGAEIEANLTGLRVGATNRRGKFLWLELDDVAQQAPSGLGLLVHLGMSGQMLVKSPDATLNPHLRARAELDDGNEVWFVDQRTFGYWWLGELVDGVPGRVSHIARDLLDDALDIPALAAVLKTKNTEIKRLLLNQEIVSGIGNIYADEMLWEAGIHPRQKASRISLTRLVALLEAGREVMTRALDQGGTSFDALYVNVNGASGYFSLSLNAYGQAGKPCARCGTPIARETFMNRGSHFCNRCQKVR.

P2 acts as the Schiff-base intermediate with DNA in catalysis. E3 functions as the Proton donor in the catalytic mechanism. The active-site Proton donor; for beta-elimination activity is K61. Residues H102, R121, and K163 each coordinate DNA. An FPG-type zinc finger spans residues 249–283 (NAYGQAGKPCARCGTPIARETFMNRGSHFCNRCQK). R273 serves as the catalytic Proton donor; for delta-elimination activity.

Belongs to the FPG family. In terms of assembly, monomer. Zn(2+) serves as cofactor.

It catalyses the reaction Hydrolysis of DNA containing ring-opened 7-methylguanine residues, releasing 2,6-diamino-4-hydroxy-5-(N-methyl)formamidopyrimidine.. It carries out the reaction 2'-deoxyribonucleotide-(2'-deoxyribose 5'-phosphate)-2'-deoxyribonucleotide-DNA = a 3'-end 2'-deoxyribonucleotide-(2,3-dehydro-2,3-deoxyribose 5'-phosphate)-DNA + a 5'-end 5'-phospho-2'-deoxyribonucleoside-DNA + H(+). Functionally, involved in base excision repair of DNA damaged by oxidation or by mutagenic agents. Acts as a DNA glycosylase that recognizes and removes damaged bases. Has a preference for oxidized purines, such as 7,8-dihydro-8-oxoguanine (8-oxoG). Has AP (apurinic/apyrimidinic) lyase activity and introduces nicks in the DNA strand. Cleaves the DNA backbone by beta-delta elimination to generate a single-strand break at the site of the removed base with both 3'- and 5'-phosphates. This is Formamidopyrimidine-DNA glycosylase from Corynebacterium efficiens (strain DSM 44549 / YS-314 / AJ 12310 / JCM 11189 / NBRC 100395).